The chain runs to 476 residues: Aspartyl/glutamyl-tRNA(Asn/Gln) amidotransferase subunit B (476 aa).

It belongs to the GatB/GatE family. GatB subfamily. As to quaternary structure, heterotrimer of A, B and C subunits.

It carries out the reaction L-glutamyl-tRNA(Gln) + L-glutamine + ATP + H2O = L-glutaminyl-tRNA(Gln) + L-glutamate + ADP + phosphate + H(+). The enzyme catalyses L-aspartyl-tRNA(Asn) + L-glutamine + ATP + H2O = L-asparaginyl-tRNA(Asn) + L-glutamate + ADP + phosphate + 2 H(+). In terms of biological role, allows the formation of correctly charged Asn-tRNA(Asn) or Gln-tRNA(Gln) through the transamidation of misacylated Asp-tRNA(Asn) or Glu-tRNA(Gln) in organisms which lack either or both of asparaginyl-tRNA or glutaminyl-tRNA synthetases. The reaction takes place in the presence of glutamine and ATP through an activated phospho-Asp-tRNA(Asn) or phospho-Glu-tRNA(Gln). The protein is Aspartyl/glutamyl-tRNA(Asn/Gln) amidotransferase subunit B of Geobacillus kaustophilus (strain HTA426).